Here is a 376-residue protein sequence, read N- to C-terminus: Protein-tyrosine sulfotransferase 2 (376 aa).

At 1–8 (MRLSVRKV) the chain is on the cytoplasmic side. A helical; Signal-anchor for type II membrane protein membrane pass occupies residues 9–25 (LLAVGCALALVLAVQLG). Residues 26–376 (QQVLECRAVL…NSTSPHLGSS (351 aa)) are Lumenal-facing. 77 to 81 (RSGTT) contributes to the 3'-phosphoadenylyl sulfate binding site. Cysteine 95 and cysteine 155 form a disulfide bridge. Glutamate 98 (proton donor/acceptor) is an active-site residue. The tract at residues 100–104 (RIIPR) is interaction with peptide substrate. The 3'-phosphoadenylyl sulfate site is built by arginine 182, serine 190, and arginine 194. The cysteines at positions 224 and 232 are disulfide-linked. 3'-phosphoadenylyl sulfate-binding positions include tyrosine 237, 284-293 (STDQVIKPVN), and lysine 299. N-linked (GlcNAc...) asparagine glycosylation is found at asparagine 342 and asparagine 367.

Belongs to the protein sulfotransferase family. As to quaternary structure, homodimer. Can also form heterodimers with TPST1. In terms of processing, N-glycosylated.

It localises to the golgi apparatus membrane. The catalysed reaction is L-tyrosyl-[protein] + 3'-phosphoadenylyl sulfate = O-sulfo-L-tyrosine-[protein] + adenosine 3',5'-bisphosphate + H(+). Catalyzes the O-sulfation of tyrosine residues within acidic motifs of polypeptides, using 3'-phosphoadenylyl sulfate (PAPS) as cosubstrate. The sequence is that of Protein-tyrosine sulfotransferase 2 (Tpst2) from Rattus norvegicus (Rat).